The following is an 85-amino-acid chain: ATP synthase subunit c (85 aa).

A run of 2 helical transmembrane segments spans residues 10 to 30 (IAVAIIVGLCALGTAVGFAVL) and 53 to 73 (FIIAGLLDAVPMIGIVIALLF).

The protein belongs to the ATPase C chain family. F-type ATPases have 2 components, F(1) - the catalytic core - and F(0) - the membrane proton channel. F(1) has five subunits: alpha(3), beta(3), gamma(1), delta(1), epsilon(1). F(0) has three main subunits: a(1), b(2) and c(10-14). The alpha and beta chains form an alternating ring which encloses part of the gamma chain. F(1) is attached to F(0) by a central stalk formed by the gamma and epsilon chains, while a peripheral stalk is formed by the delta and b chains.

The protein resides in the cell inner membrane. Its function is as follows. F(1)F(0) ATP synthase produces ATP from ADP in the presence of a proton or sodium gradient. F-type ATPases consist of two structural domains, F(1) containing the extramembraneous catalytic core and F(0) containing the membrane proton channel, linked together by a central stalk and a peripheral stalk. During catalysis, ATP synthesis in the catalytic domain of F(1) is coupled via a rotary mechanism of the central stalk subunits to proton translocation. In terms of biological role, key component of the F(0) channel; it plays a direct role in translocation across the membrane. A homomeric c-ring of between 10-14 subunits forms the central stalk rotor element with the F(1) delta and epsilon subunits. The chain is ATP synthase subunit c from Vibrio vulnificus (strain CMCP6).